Here is a 314-residue protein sequence, read N- to C-terminus: Malate dehydrogenase (314 aa).

NAD(+) contacts are provided by residues 11–16 and Asp-35; that span reads GSGNIG. Residues Arg-84 and Arg-90 each coordinate substrate. NAD(+)-binding positions include Asn-97 and 120–122; that span reads ITN. 2 residues coordinate substrate: Asn-122 and Arg-153. His-177 (proton acceptor) is an active-site residue.

This sequence belongs to the LDH/MDH superfamily. MDH type 3 family.

It carries out the reaction (S)-malate + NAD(+) = oxaloacetate + NADH + H(+). Its function is as follows. Catalyzes the reversible oxidation of malate to oxaloacetate. The protein is Malate dehydrogenase of Rickettsia rickettsii (strain Iowa).